A 153-amino-acid chain; its full sequence is Transcriptional repressor NrdR (153 aa).

A zinc finger spans residues 3–34 (CPYCGYEDSKVIDTRPADEGRTIKRRRECLKC). The ATP-cone domain maps to 49–139 (ILVIKKDNRR…VYRQFKDINT (91 aa)).

Belongs to the NrdR family. Requires Zn(2+) as cofactor.

Negatively regulates transcription of bacterial ribonucleotide reductase nrd genes and operons by binding to NrdR-boxes. The polypeptide is Transcriptional repressor NrdR (Caldicellulosiruptor saccharolyticus (strain ATCC 43494 / DSM 8903 / Tp8T 6331)).